Reading from the N-terminus, the 515-residue chain is Fatty acyl-CoA reductase 2 (515 aa).

Over 1–464 (MSMIAAFYSN…KAKQHLRRLR (464 aa)) the chain is Cytoplasmic. The helical transmembrane segment at 465–484 (NIHYLFNTALFLIIWRLLIA) threads the bilayer. The Peroxisomal segment spans residues 485–515 (RSQMARNVWFFIVSFCYKFISYFRASSTLKV).

Belongs to the fatty acyl-CoA reductase family. Specifically expressed in the meibomian glands of the eyelid and the sebaceous glands of the skin. Also expressed in the brain where large quantities of ether lipids are synthesized.

The protein localises to the peroxisome membrane. The catalysed reaction is a long-chain fatty acyl-CoA + 2 NADPH + 2 H(+) = a long-chain primary fatty alcohol + 2 NADP(+) + CoA. The enzyme catalyses hexadecanoyl-CoA + 2 NADPH + 2 H(+) = hexadecan-1-ol + 2 NADP(+) + CoA. It catalyses the reaction octadecanoyl-CoA + 2 NADPH + 2 H(+) = octadecan-1-ol + 2 NADP(+) + CoA. It carries out the reaction a very long-chain fatty acyl-CoA + 2 NADPH + 2 H(+) = a very long-chain primary fatty alcohol + 2 NADP(+) + CoA. The catalysed reaction is an ultra-long-chain fatty acyl-CoA + 2 NADPH + 2 H(+) = an ultra long-chain primary fatty alcohol + 2 NADP(+) + CoA. The enzyme catalyses eicosanoyl-CoA + 2 NADPH + 2 H(+) = eicosan-1-ol + 2 NADP(+) + CoA. It catalyses the reaction docosanoyl-CoA + 2 NADPH + 2 H(+) = docosan-1-ol + 2 NADP(+) + CoA. It carries out the reaction tetracosanoyl-CoA + 2 NADPH + 2 H(+) = tetracosan-1-ol + 2 NADP(+) + CoA. The catalysed reaction is hexacosanoyl-CoA + 2 NADPH + 2 H(+) = hexacosan-1-ol + 2 NADP(+) + CoA. The enzyme catalyses octacosanoyl-CoA + 2 NADPH + 2 H(+) = octacosan-1-ol + 2 NADP(+) + CoA. It catalyses the reaction triacontanoyl-CoA + 2 NADPH + 2 H(+) = triacontan-1-ol + 2 NADP(+) + CoA. It carries out the reaction 18-methylnonadecanoyl-CoA + 2 NADPH + 2 H(+) = 18-methylnonadecan-1-ol + 2 NADP(+) + CoA. The catalysed reaction is 20-methylheneicosanoyl-CoA + 2 NADPH + 2 H(+) = 20-methylheneicosan-1-ol + 2 NADP(+) + CoA. The enzyme catalyses 22-methyltricosanoyl-CoA + 2 NADPH + 2 H(+) = 22-methyltricosan-1-ol + 2 NADP(+) + CoA. It catalyses the reaction 24-methylpentacosanoyl-CoA + 2 NADPH + 2 H(+) = 24-methylpentacosan-1-ol + 2 NADP(+) + CoA. Catalyzes the reduction of saturated but not unsaturated C16 or C18 fatty acyl-CoA to fatty alcohols. A lower activity can be observed with shorter fatty acyl-CoA substrates. Can produce very long-chain and ultra long-chain FAls, regardless of whether they have a straight or branched chain. It may play a role in the production of ether lipids/plasmalogens and wax monoesters which synthesis requires fatty alcohols as substrates. This is Fatty acyl-CoA reductase 2 from Mus musculus (Mouse).